A 363-amino-acid polypeptide reads, in one-letter code: Probable dual-specificity RNA methyltransferase RlmN (363 aa).

Catalysis depends on Glu-99, which acts as the Proton acceptor. The Radical SAM core domain maps to 105–341 (SENRMTACVS…VTVRKSHGAS (237 aa)). A disulfide bridge links Cys-112 with Cys-346. The [4Fe-4S] cluster site is built by Cys-119, Cys-123, and Cys-126. Residues 171–172 (GE), Ser-204, 227–229 (SLH), and Asn-303 contribute to the S-adenosyl-L-methionine site. Cys-346 serves as the catalytic S-methylcysteine intermediate.

It belongs to the radical SAM superfamily. RlmN family. Requires [4Fe-4S] cluster as cofactor.

The protein localises to the cytoplasm. It catalyses the reaction adenosine(2503) in 23S rRNA + 2 reduced [2Fe-2S]-[ferredoxin] + 2 S-adenosyl-L-methionine = 2-methyladenosine(2503) in 23S rRNA + 5'-deoxyadenosine + L-methionine + 2 oxidized [2Fe-2S]-[ferredoxin] + S-adenosyl-L-homocysteine. The enzyme catalyses adenosine(37) in tRNA + 2 reduced [2Fe-2S]-[ferredoxin] + 2 S-adenosyl-L-methionine = 2-methyladenosine(37) in tRNA + 5'-deoxyadenosine + L-methionine + 2 oxidized [2Fe-2S]-[ferredoxin] + S-adenosyl-L-homocysteine. In terms of biological role, specifically methylates position 2 of adenine 2503 in 23S rRNA and position 2 of adenine 37 in tRNAs. This chain is Probable dual-specificity RNA methyltransferase RlmN, found in Chlorobium phaeobacteroides (strain DSM 266 / SMG 266 / 2430).